The primary structure comprises 384 residues: 4-hydroxy-3-methylbut-2-en-1-yl diphosphate synthase (flavodoxin) 1 (384 aa).

[4Fe-4S] cluster is bound by residues cysteine 281, cysteine 284, cysteine 316, and glutamate 323.

It belongs to the IspG family. [4Fe-4S] cluster is required as a cofactor.

The enzyme catalyses (2E)-4-hydroxy-3-methylbut-2-enyl diphosphate + oxidized [flavodoxin] + H2O + 2 H(+) = 2-C-methyl-D-erythritol 2,4-cyclic diphosphate + reduced [flavodoxin]. The protein operates within isoprenoid biosynthesis; isopentenyl diphosphate biosynthesis via DXP pathway; isopentenyl diphosphate from 1-deoxy-D-xylulose 5-phosphate: step 5/6. Converts 2C-methyl-D-erythritol 2,4-cyclodiphosphate (ME-2,4cPP) into 1-hydroxy-2-methyl-2-(E)-butenyl 4-diphosphate. The protein is 4-hydroxy-3-methylbut-2-en-1-yl diphosphate synthase (flavodoxin) 1 of Streptomyces coelicolor (strain ATCC BAA-471 / A3(2) / M145).